Reading from the N-terminus, the 398-residue chain is Phosphoglycerate kinase (398 aa).

Substrate is bound by residues aspartate 21–asparagine 23, arginine 36, histidine 59–arginine 62, arginine 119, and arginine 157. Residues lysine 208, glycine 296, glutamate 327, and glycine 354 to serine 357 each bind ATP.

The protein belongs to the phosphoglycerate kinase family. As to quaternary structure, monomer.

The protein localises to the cytoplasm. It catalyses the reaction (2R)-3-phosphoglycerate + ATP = (2R)-3-phospho-glyceroyl phosphate + ADP. It functions in the pathway carbohydrate degradation; glycolysis; pyruvate from D-glyceraldehyde 3-phosphate: step 2/5. This Streptococcus equi subsp. zooepidemicus (strain MGCS10565) protein is Phosphoglycerate kinase.